The sequence spans 205 residues: Ribosomal RNA large subunit methyltransferase E (205 aa).

Residues glycine 60, tryptophan 62, aspartate 80, aspartate 96, and aspartate 121 each contribute to the S-adenosyl-L-methionine site. The active-site Proton acceptor is lysine 161.

Belongs to the class I-like SAM-binding methyltransferase superfamily. RNA methyltransferase RlmE family.

It is found in the cytoplasm. It catalyses the reaction uridine(2552) in 23S rRNA + S-adenosyl-L-methionine = 2'-O-methyluridine(2552) in 23S rRNA + S-adenosyl-L-homocysteine + H(+). In terms of biological role, specifically methylates the uridine in position 2552 of 23S rRNA at the 2'-O position of the ribose in the fully assembled 50S ribosomal subunit. The chain is Ribosomal RNA large subunit methyltransferase E from Chromobacterium violaceum (strain ATCC 12472 / DSM 30191 / JCM 1249 / CCUG 213 / NBRC 12614 / NCIMB 9131 / NCTC 9757 / MK).